Here is a 464-residue protein sequence, read N- to C-terminus: MKTTLVKSLYRNTKDYVGKEIVVAGWVRTVRDSKAFGFIELNDGSFFKNLQIVFEEKNLPNFKEIAKLSVGSAIIAHGELVETPGAKQPFELKATKIEIEGASTPDYPLQKKRHSFEYLRTIAHLRPRTNTFSAVFRVRSLLAYAIHKFFQERGFVYVHTPIITGSDAEGAGQMFKVTTLDINNPPRKEDGTVDFSKDFFDRETNLTVSGQLEGETYSMAFRNIYTFGPTFRAENSNTARHAAEFWMVEPEIAFADLEDDMELAEDMLKYIINYCLENAPEEMEFFNNFIDNTLLDRLNNIVSSDFAHVTYTEAIDILSKADQKFEYPVKWGNDLQTEHERYLTEKVFKKPVFVTDYPKDIKAFYMRLNDDNKTVAAMDLLVPGVGEIIGGSQREERLDYLENRMKELGLKMEDYWWYLDLRRYGSTRHAGFGLGFERAIMYITGMSNIRDVIPFPRTVHSAEF.

The protein belongs to the class-II aminoacyl-tRNA synthetase family. Homodimer.

The protein resides in the cytoplasm. It carries out the reaction tRNA(Asn) + L-asparagine + ATP = L-asparaginyl-tRNA(Asn) + AMP + diphosphate + H(+). In Acetivibrio thermocellus (strain ATCC 27405 / DSM 1237 / JCM 9322 / NBRC 103400 / NCIMB 10682 / NRRL B-4536 / VPI 7372) (Clostridium thermocellum), this protein is Asparagine--tRNA ligase.